We begin with the raw amino-acid sequence, 160 residues long: MSPAAGVPEMPALDASGVRLGIVASTWHSRICDALLAGARKVAADSGVDNPTVVRVLGAIEIPVVAQELARNHDAVVALGVVIRGQTPHFEYVCDAVTQGITRVSLDASTPVANGVLTTDNEQQALDRAGLPESAEDKGSQAAGAALSAALTLRELRARS.

5-amino-6-(D-ribitylamino)uracil-binding positions include Trp27, 59 to 61, and 81 to 83; these read AIE and VVI. 86 to 87 contributes to the (2S)-2-hydroxy-3-oxobutyl phosphate binding site; the sequence is QT. Residue His89 is the Proton donor of the active site. Residue Asn114 coordinates 5-amino-6-(D-ribitylamino)uracil. Arg128 serves as a coordination point for (2S)-2-hydroxy-3-oxobutyl phosphate.

Belongs to the DMRL synthase family. As to quaternary structure, homopentamer.

The enzyme catalyses (2S)-2-hydroxy-3-oxobutyl phosphate + 5-amino-6-(D-ribitylamino)uracil = 6,7-dimethyl-8-(1-D-ribityl)lumazine + phosphate + 2 H2O + H(+). The protein operates within cofactor biosynthesis; riboflavin biosynthesis; riboflavin from 2-hydroxy-3-oxobutyl phosphate and 5-amino-6-(D-ribitylamino)uracil: step 1/2. Functionally, catalyzes the formation of 6,7-dimethyl-8-ribityllumazine by condensation of 5-amino-6-(D-ribitylamino)uracil with 3,4-dihydroxy-2-butanone 4-phosphate. This is the penultimate step in the biosynthesis of riboflavin. This chain is 6,7-dimethyl-8-ribityllumazine synthase, found in Mycolicibacterium paratuberculosis (strain ATCC BAA-968 / K-10) (Mycobacterium paratuberculosis).